Reading from the N-terminus, the 508-residue chain is Transposase (508 aa).

The HTH IS21-type domain occupies 3–65 (LLSVIRRWHF…PFADRLSAWL (63 aa)). The Integrase catalytic domain maps to 124–299 (LAFEPGEAFQ…TIADIWVEEV (176 aa)).

It belongs to the transposase IS21/IS408/IS1162 family.

Required for the transposition of the insertion element. In Aminobacter aminovorans (Chelatobacter heintzii), this protein is Transposase (nmoT).